Consider the following 455-residue polypeptide: Adenylyltransferase and sulfurtransferase UBA4 (455 aa).

Residues Gly93, Asp114, 121-125, Lys138, and 182-183 each bind ATP; these read SNLHR and DH. Residues Cys224 and Cys227 each coordinate Zn(2+). Catalysis depends on Cys241, which acts as the Glycyl thioester intermediate; for adenylyltransferase activity. Zn(2+) is bound by residues Cys302 and Cys305. The region spanning 355–453 is the Rhodanese domain; that stretch reads QSREHTLIDV…WSEDIDAAFP (99 aa). The active-site Cysteine persulfide intermediate; for sulfurtransferase activity is Cys413.

The protein in the N-terminal section; belongs to the HesA/MoeB/ThiF family. UBA4 subfamily. The cofactor is Zn(2+).

The protein localises to the cytoplasm. It is found in the cytosol. It functions in the pathway tRNA modification; 5-methoxycarbonylmethyl-2-thiouridine-tRNA biosynthesis. Its function is as follows. Plays a central role in 2-thiolation of mcm(5)S(2)U at tRNA wobble positions of cytosolic tRNA(Lys), tRNA(Glu) and tRNA(Gln). Acts by mediating the C-terminal thiocarboxylation of sulfur carrier URM1. Its N-terminus first activates URM1 as acyl-adenylate (-COAMP), then the persulfide sulfur on the catalytic cysteine is transferred to URM1 to form thiocarboxylation (-COSH) of its C-terminus. The reaction probably involves hydrogen sulfide that is generated from the persulfide intermediate and that acts as a nucleophile towards URM1. Subsequently, a transient disulfide bond is formed. Does not use thiosulfate as sulfur donor; NFS1 probably acting as a sulfur donor for thiocarboxylation reactions. Prior mcm(5) tRNA modification by the elongator complex is required for 2-thiolation. May also be involved in protein urmylation. The chain is Adenylyltransferase and sulfurtransferase UBA4 from Lodderomyces elongisporus (strain ATCC 11503 / CBS 2605 / JCM 1781 / NBRC 1676 / NRRL YB-4239) (Yeast).